The following is a 131-amino-acid chain: Aspartate 1-decarboxylase (131 aa).

Catalysis depends on Ser-25, which acts as the Schiff-base intermediate with substrate; via pyruvic acid. Ser-25 carries the post-translational modification Pyruvic acid (Ser). Thr-57 serves as a coordination point for substrate. Tyr-58 (proton donor) is an active-site residue. Residue 73–75 coordinates substrate; that stretch reads GAA. The disordered stretch occupies residues 112–131; sequence NVPTTQKSENPGQGSLRNAI. A compositionally biased stretch (polar residues) spans 113–131; it reads VPTTQKSENPGQGSLRNAI.

Belongs to the PanD family. Heterooctamer of four alpha and four beta subunits. It depends on pyruvate as a cofactor. In terms of processing, is synthesized initially as an inactive proenzyme, which is activated by self-cleavage at a specific serine bond to produce a beta-subunit with a hydroxyl group at its C-terminus and an alpha-subunit with a pyruvoyl group at its N-terminus.

It is found in the cytoplasm. The enzyme catalyses L-aspartate + H(+) = beta-alanine + CO2. The protein operates within cofactor biosynthesis; (R)-pantothenate biosynthesis; beta-alanine from L-aspartate: step 1/1. Catalyzes the pyruvoyl-dependent decarboxylation of aspartate to produce beta-alanine. This is Aspartate 1-decarboxylase from Syntrophotalea carbinolica (strain DSM 2380 / NBRC 103641 / GraBd1) (Pelobacter carbinolicus).